The primary structure comprises 519 residues: Membrane-bound glycerophospholipid O-acyltransferase 2 (519 aa).

6 consecutive transmembrane segments (helical) span residues 22–42, 61–81, 88–108, 184–204, 236–256, and 263–283; these read PIDQ…AVWF, TLLG…HFLV, CIMI…FALG, FMGI…FIEG, LLVC…LPVE, and FQAT…LLAA. Catalysis depends on residues Asn-341 and His-372. The next 3 helical transmembrane spans lie at 365 to 385, 415 to 435, and 443 to 463; these read FFLS…FLTG, LITW…FVLL, and FYSS…LLLP. Positions 497–519 are disordered; the sequence is FSTMNNVCNQNRDTGSRHSSLTQ.

It belongs to the membrane-bound acyltransferase family. As to expression, highly expressed in epididymis, brain, testis, and ovary.

Its subcellular location is the endoplasmic reticulum membrane. It catalyses the reaction a 1-acyl-sn-glycero-3-phosphocholine + an acyl-CoA = a 1,2-diacyl-sn-glycero-3-phosphocholine + CoA. The enzyme catalyses a 1-acyl-sn-glycero-3-phosphoethanolamine + an acyl-CoA = a 1,2-diacyl-sn-glycero-3-phosphoethanolamine + CoA. The catalysed reaction is a 1-O-(1Z-alkenyl)-sn-glycero-3-phosphocholine + (9Z)-octadecenoyl-CoA = 1-O-(1Z)-alkenyl-2-(9Z)-octadecenoyl-sn-glycero-3-phosphocholine + CoA. It carries out the reaction a 1-O-(1Z-alkenyl)-sn-glycero-3-phosphoethanolamine + (9Z)-octadecenoyl-CoA = 1-O-(1Z)-alkenyl-2-(9Z)-octadecenoyl-sn-glycero-3-phosphoethanolamine + CoA. It catalyses the reaction 1-octadecanoyl-sn-glycero-3-phosphoethanolamine + (9Z)-octadecenoyl-CoA = 1-octadecanoyl-2-(9Z-octadecenoyl)-sn-glycero-3-phosphoethanolamine + CoA. The enzyme catalyses 1-octadecanoyl-sn-glycero-3-phosphocholine + (9Z)-octadecenoyl-CoA = 1-octadecanoyl-2-(9Z-octadecenoyl)-sn-glycero-3-phosphocholine + CoA. The catalysed reaction is 1-(9Z-octadecenoyl)-sn-glycero-3-phosphoethanolamine + (9Z)-octadecenoyl-CoA = 1,2-di-(9Z-octadecenoyl)-sn-glycero-3-phosphoethanolamine + CoA. It carries out the reaction 1-hexadecanoyl-sn-glycero-3-phosphoethanolamine + (9Z)-octadecenoyl-CoA = 1-hexadecanoyl-2-(9Z-octadecenoyl)-sn-glycero-3-phosphoethanolamine + CoA. It catalyses the reaction 1-hexadecanoyl-sn-glycero-3-phosphocholine + (9Z)-octadecenoyl-CoA = 1-hexadecanoyl-2-(9Z-octadecenoyl)-sn-glycero-3-phosphocholine + CoA. The enzyme catalyses (9Z)-hexadecenoyl-CoA + 1-hexadecanoyl-sn-glycero-3-phosphocholine = 1-hexadecanoyl-2-(9Z-hexadecenoyl)-sn-glycero-3-phosphocholine + CoA. The catalysed reaction is 1-hexadecanoyl-sn-glycero-3-phosphoethanolamine + (9Z)-hexadecenoyl-CoA = 1-hexadecanoyl-2-(9Z)-hexadecenoyl-sn-glycero-3-phosphoethanolamine + CoA. It carries out the reaction (9Z,12Z)-octadecadienoyl-CoA + 1-hexadecanoyl-sn-glycero-3-phosphocholine = 1-hexadecanoyl-2-(9Z,12Z-octadecadienoyl)-sn-glycero-3-phosphocholine + CoA. It participates in lipid metabolism; phospholipid metabolism. Partially inhibited by thimerosal. Functionally, acyltransferase which catalyzes the transfer of an acyl group from an acyl-CoA to a lysophospholipid leading to the production of a phospholipid and participates in the reacylation step of the phospholipid remodeling pathway also known as the Lands cycle. Catalyzes the acylation of lysophosphatidylcholine (1-acyl-sn-glycero-3-phosphocholine or LPC) and to a lesser extend lysophosphatidylethanolamine (1-acyl-sn-glycero-3-phosphoethanolamine or LPE). Does not acylates lysophosphatidic acid (LPA) and lysophosphatidylserine. Prefers oleoyl-CoA as the acyl donor. May be involved in chondrocyte differentiation. In Mus musculus (Mouse), this protein is Membrane-bound glycerophospholipid O-acyltransferase 2.